Reading from the N-terminus, the 276-residue chain is Lipoyl synthase (276 aa).

[4Fe-4S] cluster contacts are provided by Cys27, Cys32, Cys38, Cys53, Cys57, Cys60, and Ser266. A Radical SAM core domain is found at 39-255; that stretch reads FGNKTATFMI…EEIGYEMGFK (217 aa).

This sequence belongs to the radical SAM superfamily. Lipoyl synthase family. [4Fe-4S] cluster serves as cofactor.

It is found in the cytoplasm. It carries out the reaction [[Fe-S] cluster scaffold protein carrying a second [4Fe-4S](2+) cluster] + N(6)-octanoyl-L-lysyl-[protein] + 2 oxidized [2Fe-2S]-[ferredoxin] + 2 S-adenosyl-L-methionine + 4 H(+) = [[Fe-S] cluster scaffold protein] + N(6)-[(R)-dihydrolipoyl]-L-lysyl-[protein] + 4 Fe(3+) + 2 hydrogen sulfide + 2 5'-deoxyadenosine + 2 L-methionine + 2 reduced [2Fe-2S]-[ferredoxin]. The protein operates within protein modification; protein lipoylation via endogenous pathway; protein N(6)-(lipoyl)lysine from octanoyl-[acyl-carrier-protein]: step 2/2. Functionally, catalyzes the radical-mediated insertion of two sulfur atoms into the C-6 and C-8 positions of the octanoyl moiety bound to the lipoyl domains of lipoate-dependent enzymes, thereby converting the octanoylated domains into lipoylated derivatives. This is Lipoyl synthase from Aquifex aeolicus (strain VF5).